A 537-amino-acid chain; its full sequence is Chaperonin GroEL 3 (537 aa).

ATP is bound by residues 30–33 (TLGP), 87–91 (DGTTT), glycine 414, 480–482 (DAL), and aspartate 496.

It belongs to the chaperonin (HSP60) family. In terms of assembly, forms a cylinder of 14 subunits composed of two heptameric rings stacked back-to-back. Interacts with the co-chaperonin GroES.

The protein resides in the cytoplasm. The enzyme catalyses ATP + H2O + a folded polypeptide = ADP + phosphate + an unfolded polypeptide.. Together with its co-chaperonin GroES, plays an essential role in assisting protein folding. The GroEL-GroES system forms a nano-cage that allows encapsulation of the non-native substrate proteins and provides a physical environment optimized to promote and accelerate protein folding. This chain is Chaperonin GroEL 3, found in Acaryochloris marina (strain MBIC 11017).